A 148-amino-acid chain; its full sequence is Lysozyme C (148 aa).

The signal sequence occupies residues 1-18 (MKAVIILGLVLLSVTVQG). Positions 19 to 148 (KIFERCELAR…VSQYVQGCGV (130 aa)) constitute a C-type lysozyme domain. 4 disulfide bridges follow: cysteine 24/cysteine 146, cysteine 48/cysteine 134, cysteine 83/cysteine 99, and cysteine 95/cysteine 113. Active-site residues include glutamate 53 and aspartate 71.

It belongs to the glycosyl hydrolase 22 family. As to quaternary structure, monomer.

Its subcellular location is the secreted. It carries out the reaction Hydrolysis of (1-&gt;4)-beta-linkages between N-acetylmuramic acid and N-acetyl-D-glucosamine residues in a peptidoglycan and between N-acetyl-D-glucosamine residues in chitodextrins.. Lysozymes have primarily a bacteriolytic function; those in tissues and body fluids are associated with the monocyte-macrophage system and enhance the activity of immunoagents. In Papio anubis (Olive baboon), this protein is Lysozyme C (LYZ).